A 264-amino-acid polypeptide reads, in one-letter code: Teichoic acids export ATP-binding protein TagH (264 aa).

The region spanning 24-243 is the ABC transporter domain; that stretch reads IKDALIPKNK…YEAFLKTFKK (220 aa). Residue 57–64 participates in ATP binding; it reads GINGSGKS.

This sequence belongs to the ABC transporter superfamily. Teichoic acids exporter (TC 3.A.1.104.1) family. As to quaternary structure, the complex is composed of two ATP-binding proteins (TagH) and two transmembrane proteins (TagG).

The protein resides in the cell membrane. The enzyme catalyses ATP + H2O + teichoic acidSide 1 = ADP + phosphate + teichoic acidSide 2.. Its function is as follows. Part of the ABC transporter complex TagGH involved in teichoic acids export. Responsible for energy coupling to the transport system. This is Teichoic acids export ATP-binding protein TagH from Staphylococcus epidermidis (strain ATCC 35984 / DSM 28319 / BCRC 17069 / CCUG 31568 / BM 3577 / RP62A).